We begin with the raw amino-acid sequence, 355 residues long: UDP-N-acetylglucosamine--N-acetylmuramyl-(pentapeptide) pyrophosphoryl-undecaprenol N-acetylglucosamine transferase (355 aa).

Residues 13–15 (TGG), Asn-125, Arg-162, Ser-190, Ile-244, and Gln-289 each bind UDP-N-acetyl-alpha-D-glucosamine.

It belongs to the glycosyltransferase 28 family. MurG subfamily.

Its subcellular location is the cell inner membrane. It catalyses the reaction di-trans,octa-cis-undecaprenyl diphospho-N-acetyl-alpha-D-muramoyl-L-alanyl-D-glutamyl-meso-2,6-diaminopimeloyl-D-alanyl-D-alanine + UDP-N-acetyl-alpha-D-glucosamine = di-trans,octa-cis-undecaprenyl diphospho-[N-acetyl-alpha-D-glucosaminyl-(1-&gt;4)]-N-acetyl-alpha-D-muramoyl-L-alanyl-D-glutamyl-meso-2,6-diaminopimeloyl-D-alanyl-D-alanine + UDP + H(+). It participates in cell wall biogenesis; peptidoglycan biosynthesis. Functionally, cell wall formation. Catalyzes the transfer of a GlcNAc subunit on undecaprenyl-pyrophosphoryl-MurNAc-pentapeptide (lipid intermediate I) to form undecaprenyl-pyrophosphoryl-MurNAc-(pentapeptide)GlcNAc (lipid intermediate II). In Neisseria meningitidis serogroup A / serotype 4A (strain DSM 15465 / Z2491), this protein is UDP-N-acetylglucosamine--N-acetylmuramyl-(pentapeptide) pyrophosphoryl-undecaprenol N-acetylglucosamine transferase.